The chain runs to 236 residues: Ribonuclease PH (236 aa).

Residues arginine 86 and 124 to 126 each bind phosphate; that span reads GTR.

The protein belongs to the RNase PH family. As to quaternary structure, homohexameric ring arranged as a trimer of dimers.

It carries out the reaction tRNA(n+1) + phosphate = tRNA(n) + a ribonucleoside 5'-diphosphate. Functionally, phosphorolytic 3'-5' exoribonuclease that plays an important role in tRNA 3'-end maturation. Removes nucleotide residues following the 3'-CCA terminus of tRNAs; can also add nucleotides to the ends of RNA molecules by using nucleoside diphosphates as substrates, but this may not be physiologically important. Probably plays a role in initiation of 16S rRNA degradation (leading to ribosome degradation) during starvation. The sequence is that of Ribonuclease PH from Thermodesulfovibrio yellowstonii (strain ATCC 51303 / DSM 11347 / YP87).